The following is a 406-amino-acid chain: 2,3-bisphosphoglycerate-independent phosphoglycerate mutase (406 aa).

Belongs to the BPG-independent phosphoglycerate mutase family. A-PGAM subfamily.

It catalyses the reaction (2R)-2-phosphoglycerate = (2R)-3-phosphoglycerate. The protein operates within carbohydrate degradation; glycolysis; pyruvate from D-glyceraldehyde 3-phosphate: step 3/5. Catalyzes the interconversion of 2-phosphoglycerate and 3-phosphoglycerate. This chain is 2,3-bisphosphoglycerate-independent phosphoglycerate mutase, found in Methanococcus maripaludis (strain C6 / ATCC BAA-1332).